The primary structure comprises 58 residues: MSQVTVGENEGIESALRRFKRSVAKAGIFSDLRRIRHHETPVEKYKRKLKQRSRNRRR.

The protein belongs to the bacterial ribosomal protein bS21 family.

The chain is Small ribosomal subunit protein bS21 from Synechococcus sp. (strain CC9605).